Reading from the N-terminus, the 299-residue chain is Taste receptor type 2 member 1 (299 aa).

Topologically, residues 1–9 (MLESHLIIH) are extracellular. The helical transmembrane segment at 10–30 (FLLAVIQFLLGTFTNGIIVVV) threads the bilayer. Over 31–55 (NGIDLIKHRKMAPLDLLLSCLAVSR) the chain is Cytoplasmic. The helical transmembrane segment at 56–76 (IFLQLFIFYVNVIVIFFIEFI) threads the bilayer. Topologically, residues 77–81 (MCSEN) are extracellular. A helical membrane pass occupies residues 82-102 (CAILLFINELELWLATWLGVF). Over 103-124 (YCAKVASVPHPLFIWLKMKISK) the chain is Cytoplasmic. The chain crosses the membrane as a helical span at residues 125 to 145 (LVPWMILGSLLYVSMTCVFHS). The Extracellular segment spans residues 146–178 (KYAGFMVPYFLRNFFSQNATIQKEDTPAIQIFS). Asn-163 carries an N-linked (GlcNAc...) asparagine glycan. The chain crosses the membrane as a helical span at residues 179 to 199 (FVAEFLVPLLIFLVAVLLLIF). Residues 200–222 (SLGRHTRQMRNTVAGSRVPGRGA) are Cytoplasmic-facing. The chain crosses the membrane as a helical span at residues 223-243 (PISALLSILSFVILYFSHCMI). Residues 244–257 (KVFLSSLKFHVRSF) lie on the Extracellular side of the membrane. A helical transmembrane segment spans residues 258–278 (ILPFFILVIGIYPSGHSLILI). Residues 279–299 (LGNXKLKQNAKKFLLHSKCCQ) lie on the Cytoplasmic side of the membrane.

It belongs to the G-protein coupled receptor T2R family.

It is found in the membrane. In terms of biological role, receptor that may play a role in the perception of bitterness and is gustducin-linked. May play a role in sensing the chemical composition of the gastrointestinal content. The activity of this receptor may stimulate alpha gustducin, mediate PLC-beta-2 activation and lead to the gating of TRPM5. The polypeptide is Taste receptor type 2 member 1 (TAS2R1) (Pongo pygmaeus (Bornean orangutan)).